Consider the following 101-residue polypeptide: UPF0751 protein DSY3086 (101 aa).

It belongs to the UPF0751 family.

The chain is UPF0751 protein DSY3086 from Desulfitobacterium hafniense (strain Y51).